The sequence spans 544 residues: Putative lipase ATG15 (544 aa).

The Cytoplasmic segment spans residues 1-45 (MVADFDSGWYEGAGDELGQGARNGVLRERLGGNEKAQVVRSRRKA). Residues 46 to 66 (VAWNVLMVLGLILYVLYSACF) form a helical; Signal-anchor for type II membrane protein membrane-spanning segment. The Lumenal segment spans residues 67 to 544 (AQARQWWRTN…NWFGYCTEYA (478 aa)). N-linked (GlcNAc...) asparagine glycans are attached at residues asparagine 200, asparagine 229, and asparagine 234. Residue serine 362 is the Charge relay system of the active site. The interval 508 to 530 (PMPSSVASKPTPTPTSPGSPSST) is disordered.

This sequence belongs to the AB hydrolase superfamily. Lipase family. Binds to both phosphatidylinositol (PI) and phosphatidylinositol 3,5-bisphosphate (PIP2).

It localises to the endosome. Its subcellular location is the multivesicular body membrane. The protein localises to the prevacuolar compartment membrane. It carries out the reaction a triacylglycerol + H2O = a diacylglycerol + a fatty acid + H(+). Its function is as follows. Lipase which is essential for lysis of subvacuolar cytoplasm to vacuole targeted bodies and intravacuolar autophagic bodies. Involved in the lysis of intravacuolar multivesicular body (MVB) vesicles. The intravacuolar membrane disintegration by ATG15 is critical to life span extension. The chain is Putative lipase ATG15 (ATG15) from Eremothecium gossypii (strain ATCC 10895 / CBS 109.51 / FGSC 9923 / NRRL Y-1056) (Yeast).